Consider the following 172-residue polypeptide: Pre-intermoult gene 1 protein (172 aa).

An N-terminal signal peptide occupies residues 1–22 (MKLTKLWLLFVCLGLFVTLVVS). Residues 25-45 (TDSDADSDSSADSDSSADSDE) are compositionally biased toward acidic residues. The segment at 25–172 (TDSDADSDSS…RRNNNSRRRG (148 aa)) is disordered. A run of 3 repeats spans residues 27–32 (SDADSD), 33–38 (SSADSD), and 39–44 (SSADSD). Residues 27–44 (SDADSDSSADSDSSADSD) are 3 X 6 AA tandem repeats of S-S-A-D-S-D. The segment covering 55–77 (TSTTESSATNSSGSSDDASGSSS) has biased composition (low complexity). Residues 78–95 (DVDDGSDDDTDSGSDTDY) show a composition bias toward acidic residues. Residues 104–172 (VKKRANRKKA…RRNNNSRRRG (69 aa)) are compositionally biased toward basic residues.

In terms of tissue distribution, low expression in first to third instar larvae salivary glands.

This chain is Pre-intermoult gene 1 protein (Pig1), found in Drosophila melanogaster (Fruit fly).